The following is a 387-amino-acid chain: MKRTRIEDDFNPVYPYDTSSTPSIPYVAPPFVSSDGLQENPPGVLALKYTDPITTNAKHELTLKLGSNITLQNGLLSATVPTVSPPLTNSNNSLGLATSAPIAVSANSLTLATAAPLTVSNNQLSINTGRGLVITNNAVAVNPTGALGFNNTGALQLNAAGGMRVDGANLILHVAYPFEAINQLTLRLENGLEVTNGGKLNVKLGSGLQFDNNGRITISNRIQTRGVTSLTTIWSISPTPNCSIYETQDANLFLCLTKNGAHVLGTITIKGLKGALREMNDNALSVKLPFDNQGNLLNCALESSTWRYQETNAVASNALTFMPNSTVYPRNKTADPGNMLIQISPNITFSVVYNEINSGYAFTFKWSAEPGKPFHPPTAVFCYITEQ.

The protein belongs to the adenoviridae fiber family. As to quaternary structure, homotrimer. Interacts with host receptor CXCAR. Interacts (via N-terminal tail region) with pentons.

It localises to the virion. It is found in the host nucleus. In terms of biological role, forms spikes that protrude from each vertex of the icosahedral capsid. Interacts with host receptor CXCAR to provide virion initial attachment to target cell. Fiber proteins are shed during virus entry, when virus is still at the cell surface. This Homo sapiens (Human) protein is Fiber protein 2.